The primary structure comprises 160 residues: Large ribosomal subunit protein eL21 (160 aa).

Basic and acidic residues-rich tracts occupy residues 112–123 (NDQKKKEAKEKG) and 136–145 (REAHFVRTNG). Residues 112–145 (NDQKKKEAKEKGTWVQLKRQPAPPREAHFVRTNG) are disordered.

The protein belongs to the eukaryotic ribosomal protein eL21 family. In terms of assembly, component of the large ribosomal subunit.

It is found in the cytoplasm. The protein resides in the cytosol. The protein localises to the endoplasmic reticulum. Component of the large ribosomal subunit. The ribosome is a large ribonucleoprotein complex responsible for the synthesis of proteins in the cell. The protein is Large ribosomal subunit protein eL21 (RPL21) of Capra hircus (Goat).